A 225-amino-acid chain; its full sequence is uncharacterized protein (225 aa).

The interval 1–48 is disordered; it reads MTQLVTRARSARGSTLGEQPRQDQLDFADHTGTAGDGNDGAAAASGPV. Positions 20–29 are enriched in basic and acidic residues; it reads PRQDQLDFAD. The region spanning 64–136 is the HTH merR-type domain; it reads GYRGPSACQI…LHNIRVAVDH (73 aa). Residues 201 to 225 form a disordered region; the sequence is DGGESIAAPEDELASRRKHRDRKIG. Over residues 216–225 the composition is skewed to basic residues; it reads RRKHRDRKIG.

This is an uncharacterized protein from Mycobacterium tuberculosis (strain CDC 1551 / Oshkosh).